We begin with the raw amino-acid sequence, 283 residues long: DegV domain-containing protein lin2658 (283 aa).

Positions 5–282 (IAVVTDSTTY…EGALGLTWSI (278 aa)) constitute a DegV domain. Hexadecanoate is bound by residues Ser-63 and Ser-96.

May bind long-chain fatty acids, such as palmitate, and may play a role in lipid transport or fatty acid metabolism. This Listeria innocua serovar 6a (strain ATCC BAA-680 / CLIP 11262) protein is DegV domain-containing protein lin2658.